The primary structure comprises 695 residues: Potassium voltage-gated channel subfamily KQT member 4 (695 aa).

Positions 1–21 are disordered; that stretch reads MAEAPPRRLGLGPPPGDAPRA. The Cytoplasmic portion of the chain corresponds to 1-96; it reads MAEAPPRRLG…VYNVLERPRG (96 aa). Arg93 contacts a 1,2-diacyl-sn-glycero-3-phospho-(1D-myo-inositol-4,5-bisphosphate). A helical transmembrane segment spans residues 97-118; the sequence is WAFVYHVFIFLLVFSCLVLSVL. Over 119 to 129 the chain is Extracellular; that stretch reads STIQEHQELAN. Residues 130–152 form a helical membrane-spanning segment; that stretch reads ECLLILEFVMIVVFGLEYIVRVW. The Cytoplasmic portion of the chain corresponds to 153–168; the sequence is SAGCCCRYRGWQGRFR. A helical membrane pass occupies residues 169–191; it reads FARKPFCVIDFIVFVASVAVIAA. Lys172 contributes to the a 1,2-diacyl-sn-glycero-3-phospho-(1D-myo-inositol-4,5-bisphosphate) binding site. The Extracellular segment spans residues 192 to 202; it reads GTQGNIFATSA. Residues 203–223 traverse the membrane as a helical; Voltage-sensor segment; that stretch reads LRSMRFLQILRMVRMDRRGGT. A 1,2-diacyl-sn-glycero-3-phospho-(1D-myo-inositol-4,5-bisphosphate) is bound by residues Arg219, Arg220, Lys225, and Ser235. Residues 224 to 235 lie on the Cytoplasmic side of the membrane; it reads WKLLGSVVYAHS. A helical membrane pass occupies residues 236-258; the sequence is KELITAWYIGFLVLIFASFLVYL. Residues 259–270 are Extracellular-facing; sequence AEKDANSDFSSY. The pore-forming intramembrane region spans 271-292; sequence ADSLWWGTITLTTIGYGDKTPH. Thr293 is a topological domain (extracellular). A helical transmembrane segment spans residues 294–322; it reads WLGRVLAAGFALLGISFFALPAGILGSGF. Topologically, residues 323–695 are cytoplasmic; the sequence is ALKVQEQHRQ…ISRSVSTNMD (373 aa). The a 1,2-diacyl-sn-glycero-3-phospho-(1D-myo-inositol-4,5-bisphosphate) site is built by His330 and Lys333. Positions 342 to 351 are interaction with CALM; that stretch reads AANLIQAAWR. 2 disordered regions span residues 400-480 and 496-515; these read RRAP…TKVQ and RLKPRTSAEDAPSEEVAEEK. 2 stretches are compositionally biased toward polar residues: residues 443–452 and 463–480; these read GSSQRRTGPS and TSPSSEQVGEATSPTKVQ. Residues 535 to 549 form an interaction with CALM region; that stretch reads RSIRILKFLVAKRKF. The segment at 546 to 650 is C-terminal assembly domain (tetramerization); the sequence is KRKFKETLRP…SRCLRSGTSA (105 aa). The segment at 587 to 606 is disordered; that stretch reads VGRGPGDRKAREKGDKGPSD. Positions 591-605 are enriched in basic and acidic residues; sequence PGDRKAREKGDKGPS. A coiled-coil region spans residues 615–636; sequence MMGRVVKVEKQVQSIEHKLDLL.

The protein belongs to the potassium channel family. KQT (TC 1.A.1.15) subfamily. Kv7.4/KCNQ4 sub-subfamily. In terms of assembly, homotetramer. Interacts (via C-terminus) with calmodulin; forms a heterooctameric structure (with 4:4 KCNQ1:CALM stoichiometry); the interaction is calcium-independent, constitutive, participates in the proper assembly of a functional channel. The interaction with calcium-free CALM controls channel trafficking whereas interaction with calcium-bound CALM regulates channel gating. May form a functional heteromultimeric channel with KCNQ3. Interacts with HSP90AB1; promotes cell surface expression of KCNQ4. As to expression, expressed in the outer, but not the inner, sensory hair cells of the cochlea. Slightly expressed in heart, brain and skeletal muscle.

The protein localises to the basal cell membrane. It carries out the reaction K(+)(in) = K(+)(out). Its activity is regulated as follows. Two molecules of phosphatidylinositol-4,5-bisphosphate (PIP2-I and PIP2-II) are essential to activate KCNQ4 channel by inducing the coupling of the voltage-sensing domain (VSD) and the pore-forming domain (PD). Upon channel activation, PIP2-I and PIP2-II disrupt the VSD-calmodulin/CALM interaction, causing the release of CALM from the VSD which triggers the opening of the gate. Calcium suppresses KCNQ4 channel current through calcium-bound CALM C-terminus. Therefore CALM acts as calcium sensor that controls channel activity. ML213 potentiates KCNQ4 channel. KCNQ4 channel is blocked by linopirdin, XE991 and bepridil, whereas clofilium is without significant effect. Muscarinic agonist oxotremorine-M strongly suppress KCNQ4 current in CHO cells in which cloned KCNQ4 channels were coexpressed with M1 muscarinic receptors. Its function is as follows. Pore-forming subunit of the voltage-gated potassium (Kv) channel involved in the regulation of sensory cells excitability in the cochlea. KCNQ4/Kv7.4 channel is composed of 4 pore-forming subunits assembled as tetramers. Promotes the outflow of potassium ions in the repolarization phase of action potential which plays a role in regulating membrane potential of excitable cells. The channel conducts a slowly activating and deactivating current. Current often shows some inward rectification at positive potentials. Channel may be selectively permeable in vitro to other cations besides potassium, in decreasing order of affinity K(+) = Rb(+) &gt; Cs(+) &gt; Na(+). Important for normal physiological function of inner ear such as sensory perception of sound. The chain is Potassium voltage-gated channel subfamily KQT member 4 from Homo sapiens (Human).